The chain runs to 345 residues: Heat-inducible transcription repressor HrcA (345 aa).

Belongs to the HrcA family.

Functionally, negative regulator of class I heat shock genes (grpE-dnaK-dnaJ and groELS operons). Prevents heat-shock induction of these operons. This Listeria monocytogenes serotype 1/2a (strain 10403S) protein is Heat-inducible transcription repressor HrcA.